Here is a 74-residue protein sequence, read N- to C-terminus: Large ribosomal subunit protein bL31 (74 aa).

Zn(2+) is bound by residues C16, C18, C38, and C41.

The protein belongs to the bacterial ribosomal protein bL31 family. Type A subfamily. Part of the 50S ribosomal subunit. It depends on Zn(2+) as a cofactor.

Binds the 23S rRNA. The chain is Large ribosomal subunit protein bL31 from Acinetobacter baylyi (strain ATCC 33305 / BD413 / ADP1).